Reading from the N-terminus, the 481-residue chain is Surface lipoprotein assembly modifier 2 (481 aa).

Residues 1–24 (MKNGVKQLFLLSLIGLSLTNVAWA) form the signal peptide. The interval 24-192 (AEVARPKNDT…QYLLTLNQRN (169 aa)) is N-terminal domain. Residues 193 to 481 (QWIWQVGLNF…RIYLEIGKIF (289 aa)) form a C-terminal probable beta barrel region. 14 beta stranded membrane-spanning segments follow: residues 194-204 (WIWQVGLNFLN), 223-243 (AWEK…KKWP), 248-257 (FFSKTMFNGN), 271-281 (TVRIGGGLGYQ), 285-295 (VEVSLFPFQEK), 315-325 (LGIRLENVDWL), 329-339 (WQISTALEYGE), 353-363 (YFVSSTLFYLP), 368-377 (FWFVGMDFHR), 390-399 (KTLRLGWGQD), 404-414 (ISSRLTFSYAN), 432-441 (YTTTITLWHR), 448-458 (LTPKLSWDYQK), and 471-481 (NRIYLEIGKIF).

Belongs to the Slam family.

Its subcellular location is the cell outer membrane. Functionally, required for correct export to the cell surface of some cell outer membrane lipoproteins. The chain is Surface lipoprotein assembly modifier 2 from Haemophilus influenzae (strain ATCC 51907 / DSM 11121 / KW20 / Rd).